Reading from the N-terminus, the 300-residue chain is Phosphatidylserine decarboxylase proenzyme (300 aa).

Active-site charge relay system; for autoendoproteolytic cleavage activity residues include Asp117, His173, and Ser260. The active-site Schiff-base intermediate with substrate; via pyruvic acid; for decarboxylase activity is the Ser260. Pyruvic acid (Ser); by autocatalysis is present on Ser260.

This sequence belongs to the phosphatidylserine decarboxylase family. PSD-B subfamily. Prokaryotic type II sub-subfamily. In terms of assembly, heterodimer of a large membrane-associated beta subunit and a small pyruvoyl-containing alpha subunit. Requires pyruvate as cofactor. Is synthesized initially as an inactive proenzyme. Formation of the active enzyme involves a self-maturation process in which the active site pyruvoyl group is generated from an internal serine residue via an autocatalytic post-translational modification. Two non-identical subunits are generated from the proenzyme in this reaction, and the pyruvate is formed at the N-terminus of the alpha chain, which is derived from the carboxyl end of the proenzyme. The autoendoproteolytic cleavage occurs by a canonical serine protease mechanism, in which the side chain hydroxyl group of the serine supplies its oxygen atom to form the C-terminus of the beta chain, while the remainder of the serine residue undergoes an oxidative deamination to produce ammonia and the pyruvoyl prosthetic group on the alpha chain. During this reaction, the Ser that is part of the protease active site of the proenzyme becomes the pyruvoyl prosthetic group, which constitutes an essential element of the active site of the mature decarboxylase.

The protein localises to the cell membrane. It carries out the reaction a 1,2-diacyl-sn-glycero-3-phospho-L-serine + H(+) = a 1,2-diacyl-sn-glycero-3-phosphoethanolamine + CO2. It functions in the pathway phospholipid metabolism; phosphatidylethanolamine biosynthesis; phosphatidylethanolamine from CDP-diacylglycerol: step 2/2. Its function is as follows. Catalyzes the formation of phosphatidylethanolamine (PtdEtn) from phosphatidylserine (PtdSer). This Fusobacterium nucleatum subsp. nucleatum (strain ATCC 25586 / DSM 15643 / BCRC 10681 / CIP 101130 / JCM 8532 / KCTC 2640 / LMG 13131 / VPI 4355) protein is Phosphatidylserine decarboxylase proenzyme.